The sequence spans 481 residues: Glutamate--tRNA ligase (481 aa).

A 'HIGH' region motif is present at residues 11–21 (PSPTGLLHIGN). The short motif at 255–259 (KLSKR) is the 'KMSKS' region element. Lys258 contacts ATP.

Belongs to the class-I aminoacyl-tRNA synthetase family. Glutamate--tRNA ligase type 1 subfamily. Monomer.

It is found in the cytoplasm. It catalyses the reaction tRNA(Glu) + L-glutamate + ATP = L-glutamyl-tRNA(Glu) + AMP + diphosphate. In terms of biological role, catalyzes the attachment of glutamate to tRNA(Glu) in a two-step reaction: glutamate is first activated by ATP to form Glu-AMP and then transferred to the acceptor end of tRNA(Glu). The protein is Glutamate--tRNA ligase of Streptococcus pyogenes serotype M6 (strain ATCC BAA-946 / MGAS10394).